A 273-amino-acid polypeptide reads, in one-letter code: Dermonecrotic toxin LapSicTox-alphaIB1aii (273 aa).

Residue His-5 is part of the active site. Mg(2+) contacts are provided by Glu-25 and Asp-27. Residue His-41 is the Nucleophile of the active site. Disulfide bonds link Cys-45-Cys-51 and Cys-47-Cys-190. Asp-85 provides a ligand contact to Mg(2+). An N-linked (GlcNAc...) asparagine glycan is attached at Asn-250.

It belongs to the arthropod phospholipase D family. Class II subfamily. The cofactor is Mg(2+). Expressed by the venom gland.

It is found in the secreted. The catalysed reaction is an N-(acyl)-sphingosylphosphocholine = an N-(acyl)-sphingosyl-1,3-cyclic phosphate + choline. It catalyses the reaction an N-(acyl)-sphingosylphosphoethanolamine = an N-(acyl)-sphingosyl-1,3-cyclic phosphate + ethanolamine. The enzyme catalyses a 1-acyl-sn-glycero-3-phosphocholine = a 1-acyl-sn-glycero-2,3-cyclic phosphate + choline. It carries out the reaction a 1-acyl-sn-glycero-3-phosphoethanolamine = a 1-acyl-sn-glycero-2,3-cyclic phosphate + ethanolamine. Functionally, dermonecrotic toxins cleave the phosphodiester linkage between the phosphate and headgroup of certain phospholipids (sphingolipid and lysolipid substrates), forming an alcohol (often choline) and a cyclic phosphate. This toxin acts on sphingomyelin (SM). It may also act on ceramide phosphoethanolamine (CPE), lysophosphatidylcholine (LPC) and lysophosphatidylethanolamine (LPE), but not on lysophosphatidylserine (LPS), and lysophosphatidylglycerol (LPG). It acts by transphosphatidylation, releasing exclusively cyclic phosphate products as second products. Induces dermonecrosis, hemolysis, increased vascular permeability, edema, inflammatory response, and platelet aggregation. This Loxosceles apachea (Apache recluse spider) protein is Dermonecrotic toxin LapSicTox-alphaIB1aii.